The chain runs to 238 residues: GATA transcription factor 7 (238 aa).

A disordered region spans residues 24–64; sequence TSLESSSSQRKEDEQEREKFKSFSDQSTRLSPPEDLLSFPG. Residues 32–45 are compositionally biased toward basic and acidic residues; it reads QRKEDEQEREKFKS. The Nuclear localization signal motif lies at 112-119; it reads KPRSKRRR. The segment at 160–214 adopts a GATA-type zinc-finger fold; sequence QQLRRCCSHCGVQKTPQWRMGPLGAKTLCNACGVRFKSGRLLPEYRPACSPTFTN.

It belongs to the type IV zinc-finger family. Class A subfamily.

It is found in the nucleus. In terms of biological role, transcriptional activator that specifically binds 5'-GATA-3' or 5'-GAT-3' motifs within gene promoters. May be involved in the regulation of some light-responsive genes. This Arabidopsis thaliana (Mouse-ear cress) protein is GATA transcription factor 7 (GATA7).